Here is a 620-residue protein sequence, read N- to C-terminus: LysM domain receptor-like kinase 3 (620 aa).

The first 23 residues, 1 to 23 (MNLKNGLLLFILFLDCVFFKVES), serve as a signal peptide directing secretion. At 24-231 (KCVKGCDVAL…YSRTGIAKGS (208 aa)) the chain is on the extracellular side. Cystine bridges form between Cys25–Cys92, Cys29–Cys154, and Cys90–Cys152. Asn46 carries N-linked (GlcNAc...) asparagine glycosylation. The LysM 1; degenerate domain occupies 46–72 (NISNFMQSKIVLTNSFDVIMSYNRDVV). LysM domains lie at 102 to 148 (FEYT…KINV) and 167 to 210 (VTYP…VFIP). Residues 108–114 (EGDDYDL) and 136–142 (DPNHIPV) contribute to the chitin site. 2 N-linked (GlcNAc...) asparagine glycosylation sites follow: Asn147 and Asn199. A helical transmembrane segment spans residues 232 to 252 (AVGIAMAGIFGLLLFVIYIYA). The Cytoplasmic portion of the chain corresponds to 253–620 (KYFQKKEEEK…QSLINLLSTR (368 aa)). The span at 265-278 (LPQTSRAFSTQDAS) shows a compositional bias: polar residues. Positions 265-292 (LPQTSRAFSTQDASGSAEYETSGSSGHA) are disordered. Ser269 and Ser273 each carry phosphoserine. Residues 322 to 595 (FSLDNKIGQG…RSIVVALMTL (274 aa)) form the Protein kinase domain. ATP-binding positions include 328 to 336 (IGQGGFGAV) and Lys349. Asp441 acts as the Proton acceptor in catalysis.

It belongs to the protein kinase superfamily. Ser/Thr protein kinase family. In terms of assembly, forms homodimers and homooligomers. Forms heteromeric complexes with NFP at the cell periphery in nodules. Interacts with PUB1. Autophosphorylated. As to expression, expressed in the epidermal and root hair cells of the developing root hair zone during nonsymbiotic growth. Accumulates in roots and nodules during symbiotic growth with rhizobia. Localized at the cell periphery in a narrow zone of about two cell layers (e.g. L1/L2 zone) at the nodule apex upon infection by rhizobia, from the meristem to the infection zone (at protein level).

Its subcellular location is the cell membrane. It localises to the vacuole lumen. It catalyses the reaction L-seryl-[protein] + ATP = O-phospho-L-seryl-[protein] + ADP + H(+). It carries out the reaction L-threonyl-[protein] + ATP = O-phospho-L-threonyl-[protein] + ADP + H(+). In terms of biological role, putative receptor for S.meliloti Nod factor signals essential for the establishment of the nitrogen-fixing, root nodule symbiosis with S.meliloti. Involved in the control of root hair curling after S.meliloti infection, probably by modulating the reorganization of the microtubular cytoskeleton in epidermal and cortical cells. Regulates a subset of Nod factor-induced genes. The chain is LysM domain receptor-like kinase 3 from Medicago truncatula (Barrel medic).